A 387-amino-acid chain; its full sequence is GTPase Obg (387 aa).

In terms of domain architecture, Obg spans 1–159; that stretch reads MKFLDEAKIY…MWVRLEMKLL (159 aa). The 175-residue stretch at 160–334 folds into the OBG-type G domain; that stretch reads ADVGLVGMPN…LVYHVGGMVK (175 aa). GTP contacts are provided by residues 166-173, 191-195, 213-216, 283-286, and 315-317; these read GMPNAGKS, FTTLQ, DIPG, SKAD, and SSA. Mg(2+)-binding residues include serine 173 and threonine 193. The disordered stretch occupies residues 347–379; sequence LEDAPTRAGSKALRDEHAPSWQDDDDDDDDDDG. Over residues 368–379 the composition is skewed to acidic residues; the sequence is QDDDDDDDDDDG.

Belongs to the TRAFAC class OBG-HflX-like GTPase superfamily. OBG GTPase family. As to quaternary structure, monomer. Mg(2+) is required as a cofactor.

Its subcellular location is the cytoplasm. In terms of biological role, an essential GTPase which binds GTP, GDP and possibly (p)ppGpp with moderate affinity, with high nucleotide exchange rates and a fairly low GTP hydrolysis rate. Plays a role in control of the cell cycle, stress response, ribosome biogenesis and in those bacteria that undergo differentiation, in morphogenesis control. This Magnetococcus marinus (strain ATCC BAA-1437 / JCM 17883 / MC-1) protein is GTPase Obg.